A 376-amino-acid chain; its full sequence is Protein FAM199X (376 aa).

The segment covering 237 to 253 (YIKEHSPRQRSTRESWK) has biased composition (basic and acidic residues). Residues 237-350 (YIKEHSPRQR…QRQARKERLS (114 aa)) are disordered. The segment covering 255 to 300 (TSYSTASTSGVSGASVSSSSASMVSTASSTGSSGGNSASNSSANMS) has biased composition (low complexity). Positions 318 to 337 (DSKKRSKQRKLQQKALRKRQ) are enriched in basic residues. Residues 320 to 349 (KKRSKQRKLQQKALRKRQLKEQRQARKERL) are a coiled coil. The segment covering 338–349 (LKEQRQARKERL) has biased composition (basic and acidic residues).

The protein belongs to the FAM199 family.

This chain is Protein FAM199X (fam199x), found in Xenopus tropicalis (Western clawed frog).